The sequence spans 704 residues: Glycogen [starch] synthase, liver (704 aa).

Residues Ser8 and Ser11 each carry the phosphoserine modification. Lys40 lines the UDP pocket. His205 and Arg211 together coordinate UDP-alpha-D-glucose. Alpha-D-glucose 6-phosphate is bound by residues His291, Glu292, Gln294, His297, and Lys301. Arg331 contacts UDP. Residue Arg331 coordinates UDP-alpha-D-glucose. An alpha-D-glucose 6-phosphate-binding site is contributed by His501. UDP-alpha-D-glucose is bound by residues Glu510, Trp512, and Gly513. Thr515 contributes to the UDP binding site. Residues Arg582 and Arg586 each coordinate alpha-D-glucose 6-phosphate. The tract at residues Lys620 to Asn704 is disordered. The residue at position 627 (Ser627) is a Phosphoserine. Residues Ser641, Ser645, Ser649, and Ser653 each carry the phosphoserine; by GSK3-alpha and GSK3-beta modification. The span at Ser647 to Ser657 shows a compositional bias: low complexity. Ser657 bears the Phosphoserine; by CK2 mark. The segment covering Val659–Ala675 has biased composition (acidic residues). Ser684 is subject to Phosphoserine.

Belongs to the glycosyltransferase 3 family. In terms of assembly, part of the glycogen synthase (GS)-glycogenin complex, a heterooctamer composed of a tetramer of GS and 2 dimers of glycogenin, where each GS protomer binds to one glycogenin subunit (via glycogenin C-terminus); the GS tetramer may dissociate from glycogenin dimers to continue glycogen polymerization on its own. May also form a heterooctamer complex with GYG1 (via GYG1 C-terminus). Post-translationally, primed phosphorylation at Ser-657 (site 5) by CSNK2A1 and CSNK2A2 is required for inhibitory phosphorylation at Ser-641 (site 3a), Ser-645 (site 3b), Ser-649 (site 3c) and Ser-653 (site 4) by GSK3A an GSK3B. Dephosphorylation at Ser-641 and Ser-645 by PP1 activates the enzyme. Phosphorylation at Ser-8 is not required for interaction with GYG1. Interaction with GYG1 does not regulate the phosphorylation at Ser-8 and Ser-641. In terms of tissue distribution, specifically expressed in liver (at protein level).

It catalyses the reaction [(1-&gt;4)-alpha-D-glucosyl](n) + UDP-alpha-D-glucose = [(1-&gt;4)-alpha-D-glucosyl](n+1) + UDP + H(+). It participates in glycan biosynthesis; glycogen biosynthesis. Its activity is regulated as follows. Allosteric activation by glucose-6-phosphate. Phosphorylation reduces the activity towards UDP-glucose. When in the non-phosphorylated state, glycogen synthase does not require glucose-6-phosphate as an allosteric activator; when phosphorylated it does. Its function is as follows. Glycogen synthase participates in the glycogen biosynthetic process along with glycogenin and glycogen branching enzyme. Extends the primer composed of a few glucose units formed by glycogenin by adding new glucose units to it. In this context, glycogen synthase transfers the glycosyl residue from UDP-Glc to the non-reducing end of alpha-1,4-glucan. This is Glycogen [starch] synthase, liver from Rattus norvegicus (Rat).